Here is a 707-residue protein sequence, read N- to C-terminus: MSKKLSLEERLSLATKKGRKKNKRSTSNLSSPSPVVLSNNEQESARTSIDDAAAGVVSIDNAENIDDPAVRSESTVEGDTGKADSIAVDDVVHPDHNRTDCFDDTMVSLPTWLPKNYTEFTVEELVKEISPEYLRLNKQIDDLTNELNRKSQIETTDSSFFKLIKEKDDLIDQLRKEGAKLAETELRQSNQIKALRTKVKDLEYEVSELNDSSAQSVENYNELQSLYHNIQGQLAEATNKLKDADKQKESLETLEKNIKEKDDLITILQQSLDNMRTLLEKEKSEFQTEKKALQEATVDQVTTLETKLEQLRIELDSSTQNLDAKSNRDFVDDQQSYEEKQHASFQYNRLKEQLESSKANWDSIEYALNTKIVNLENRFESTMKEKNDIEEKYQTALRSSETLGKQLEKEKENHSKAVLEVKDLERRAETLKSSLQSISDDYNLLKKKYEIQRSQLEQKENELKPHQENSNEKIIDKIPVELTDSLNSMEGNIEDEWTLPQENSMLSLSMSKLGELESDPSLKPIYNESHETICSEESQHFDRKNVDFSIDDIPEEAAALQAIREGESMNSLNNTSIPYRRASVQLSNSNGHISAHLVNKLSTELKRLEGELSASKELYDNLLKEKTKANDEILRLLEENDKFNEVNKQKDDLLKRVEQMQSKLETSLQLLGEKTEQVEELENDVSDLKEMMHQQVQQMVEMQGKMR.

Positions 1–11 (MSKKLSLEERL) are enriched in basic and acidic residues. The interval 1–52 (MSKKLSLEERLSLATKKGRKKNKRSTSNLSSPSPVVLSNNEQESARTSIDDA) is disordered. An N-acetylserine modification is found at Ser2. Residues 27 to 40 (SNLSSPSPVVLSNN) show a composition bias toward low complexity. Positions 122–473 (VEELVKEISP…KPHQENSNEK (352 aa)) form a coiled coil. Phosphoserine occurs at positions 151, 538, 549, 568, 571, 576, and 589. Residues 594-706 (SAHLVNKLST…QQMVEMQGKM (113 aa)) are a coiled coil.

Belongs to the SGM1 family. In terms of assembly, interacts with YPT6.

It is found in the golgi apparatus. In terms of biological role, required for normal growth rate on galactose and mannose. This chain is Protein SGM1 (SGM1), found in Saccharomyces cerevisiae (strain ATCC 204508 / S288c) (Baker's yeast).